The chain runs to 102 residues: Carboxysome shell protein CcmK2 (102 aa).

In terms of domain architecture, BMC spans 4–90 (AVGMIETLGF…PHENLEYVLP (87 aa)).

The protein belongs to the bacterial microcompartments protein family. CcmK subfamily. As to quaternary structure, homohexamer. Interacts with CcmO in the carboxysome. Interacts with CcmN.

It is found in the carboxysome. Its function is as follows. One of the shell proteins of the carboxysome, a polyhedral inclusion where RuBisCO (ribulose bisphosphate carboxylase, rbcL-rbcS) is sequestered. Assembles into hexamers which make sheets that form the facets of the polyhedral carboxysome. The hexamer central pore probably regulates metabolite flux. In terms of biological role, the major shell protein of the carboxysome, a polyhedral inclusion where RuBisCO (ribulose bisphosphate carboxylase, rbcL-rbcS) is sequestered. Hexamers make sheets that form the facets of the polyhedral carboxysome. The shell is 4.5 nm thick, as observed for CcmK hexamers. Required for recruitment of CcmO to the pre-carboxysome. In PCC 7942 there are several CcmK paralogs with presumably functional differences; replacing the central pore residues (34-37) with those of either CcmK4 from this organism (Tyr-Met-Arg-Ala) or from an alpha-type carboxysome forming cyanobacterium (CsoS1 of P.marinus strain MIT 9313, Arg-Glu-Phe-Val) allows the bacterium to make carboxysomes, but the expression level is too low to know if the carboxysome is functional for CO(2) fixation. Beta-carboxysome assembly initiates when soluble RuBisCO is condensed into a liquid matrix in a pre-carboxysome by the RbcS-like domains of probably both CcmM58 and CcmM35. CcmN interacts with the N-terminus of CcmM58, and then recruits the CcmK2 major shell protein via CcmN's encapsulation peptide. Shell formation requires CcmK proteins and CcmO. CcmL caps the otherwise elongated carboxysome. Once fully encapsulated carboxysomes are formed, they migrate within the cell probably via interactions with the cytoskeleton. This chain is Carboxysome shell protein CcmK2, found in Synechococcus elongatus (strain ATCC 33912 / PCC 7942 / FACHB-805) (Anacystis nidulans R2).